Reading from the N-terminus, the 895-residue chain is AP-1 complex subunit gamma (895 aa).

5 HEAT repeats span residues 130–166 (TAMA…LRKV), 167–205 (PDLT…MDST), 211–256 (KKMV…ILGQ), 301–339 (NGLK…TDIQ), and 341–376 (VQRH…ESNI). Disordered stretches follow at residues 591 to 687 (KQEE…MNNM), 706 to 733 (NNNS…NNKS), and 746 to 770 (QLTP…QTSV). Composition is skewed to low complexity over residues 604–626 (PTQT…QSSQ), 639–658 (QSSA…GGNA), 675–687 (NGNM…MNNM), 706–731 (NNNS…NNNN), and 746–765 (QLTP…LSPT). Residues 775–893 (PQPLTFLVYQ…SDVPDTPLPS (119 aa)) enclose the GAE domain.

This sequence belongs to the adaptor complexes large subunit family. Adaptor protein complex 1 (AP-1) is a heterotetramer composed of two large adaptins (gamma-type subunit and beta-type subunit), a medium adaptin (mu-type subunit) and a small adaptin (sigma-type subunit). Interacts with rhgA.

Its subcellular location is the golgi apparatus. It localises to the trans-Golgi network. The protein resides in the cytoplasmic vesicle. It is found in the clathrin-coated vesicle membrane. Subunit of clathrin-associated adaptor protein complex 1 that plays a role in protein sorting in the trans-Golgi network (TGN) and endosomes. The AP complexes mediate the recruitment of clathrin to membranes and the recognition of sorting signals within the cytosolic tails of transmembrane cargo molecules. Also involved in early steps of phagocytosis and macropinocytosis. The protein is AP-1 complex subunit gamma (ap1g1) of Dictyostelium discoideum (Social amoeba).